Reading from the N-terminus, the 523-residue chain is Mitochondrial distribution and morphology protein 12 (523 aa).

One can recognise an SMP-LTD domain in the interval 1–483; sequence MSFDINWEKL…WPSWICVDMA (483 aa). A compositionally biased stretch (basic and acidic residues) spans 108-117; sequence HEADIINDHD. Disordered stretches follow at residues 108–160, 178–213, 270–313, and 483–523; these read HEAD…QYDE, SAST…PFQS, KTKE…NAKN, and AEND…KKED. 2 stretches are compositionally biased toward acidic residues: residues 118–140 and 148–158; these read YGDE…DDEN and EDEENEESSQY. Composition is skewed to polar residues over residues 178-187 and 277-288; these read SASTPKRTSP and SGDQQQGKQTGK. Basic and acidic residues predominate over residues 289–313; that stretch reads ANEKGQKHKHEHEEEQGSDKQNAKN. Residues 483–501 are compositionally biased toward acidic residues; that stretch reads AENDDEEEDDDDDDHDEDN. Basic and acidic residues predominate over residues 502–523; that stretch reads EGRGRMRDTGDVDVRDHDKKED.

This sequence belongs to the MDM12 family. As to quaternary structure, component of the ER-mitochondria encounter structure (ERMES) or MDM complex, composed of MMM1, MDM10, MDM12 and MDM34. An MMM1 homodimer associates with one molecule of MDM12 on each side in a pairwise head-to-tail manner, and the SMP-LTD domains of MMM1 and MDM12 generate a continuous hydrophobic tunnel for phospholipid trafficking.

It localises to the mitochondrion outer membrane. The protein localises to the endoplasmic reticulum membrane. In terms of biological role, component of the ERMES/MDM complex, which serves as a molecular tether to connect the endoplasmic reticulum (ER) and mitochondria. Components of this complex are involved in the control of mitochondrial shape and protein biogenesis, and function in nonvesicular lipid trafficking between the ER and mitochondria. MDM12 is required for the interaction of the ER-resident membrane protein MMM1 and the outer mitochondrial membrane-resident beta-barrel protein MDM10. The MDM12-MMM1 subcomplex functions in the major beta-barrel assembly pathway that is responsible for biogenesis of all mitochondrial outer membrane beta-barrel proteins, and acts in a late step after the SAM complex. The MDM10-MDM12-MMM1 subcomplex further acts in the TOM40-specific pathway after the action of the MDM12-MMM1 complex. Essential for establishing and maintaining the structure of mitochondria and maintenance of mtDNA nucleoids. This is Mitochondrial distribution and morphology protein 12 from Lodderomyces elongisporus (strain ATCC 11503 / CBS 2605 / JCM 1781 / NBRC 1676 / NRRL YB-4239) (Yeast).